The following is a 306-amino-acid chain: Serine/threonine-protein phosphatase PP-X homolog 4 (306 aa).

Mn(2+) contacts are provided by D53, H55, D81, and N113. H114 acts as the Proton donor in catalysis. Residues H163 and H237 each coordinate Mn(2+).

The protein belongs to the PPP phosphatase family. PP-4 (PP-X) subfamily. Requires Mn(2+) as cofactor.

The catalysed reaction is O-phospho-L-seryl-[protein] + H2O = L-seryl-[protein] + phosphate. It catalyses the reaction O-phospho-L-threonyl-[protein] + H2O = L-threonyl-[protein] + phosphate. The polypeptide is Serine/threonine-protein phosphatase PP-X homolog 4 (Ppx4) (Paramecium tetraurelia).